The primary structure comprises 487 residues: MTIAEWRQRLNNREISSLELVNEQFARIKDVDNKLHAFLKLEEDSARENAKRIDEARLSGKELPPLAGIPFAIKDNLCTKGVKTTCSSKMLESFVPPYESTVTQRLWEAGAILLGKTNLDEFAMGSSTETSAFGATSNPWDLSRVPGGSSGGSAAAVASGLCLAALGSDTGGSIRQPASFCGVVGLKPTYGRVSRWGLVAFASSLDQVGPFTTSVEDAAEVLQVIAGKDPLDSTCLDKPVPNFSEYFSDSIKGLRIGLIKECFEQEGISLEVKESVLKAANQLQSLGAELIDVSCPRFNDGIATYYVIAPSEASANLARYDGVKYGYRQHGEENLSAMTSLSRAKGFGSEVQRRILIGTYALSAGYFDAYYKKAQKVRTLISRDFANSFEKVDLLLTPTSPSTAFKAGSHDNDPLAMYLSDLLTIPVNLAGLPAISVPCGFDKEGLPIGLQLIGDVLGEQRLLQVAHHYEQAANVMGNCPKGDLIPA.

Catalysis depends on charge relay system residues K74 and S149. The Acyl-ester intermediate role is filled by S173.

This sequence belongs to the amidase family. GatA subfamily. Heterotrimer of A, B and C subunits.

The enzyme catalyses L-glutamyl-tRNA(Gln) + L-glutamine + ATP + H2O = L-glutaminyl-tRNA(Gln) + L-glutamate + ADP + phosphate + H(+). In terms of biological role, allows the formation of correctly charged Gln-tRNA(Gln) through the transamidation of misacylated Glu-tRNA(Gln) in organisms which lack glutaminyl-tRNA synthetase. The reaction takes place in the presence of glutamine and ATP through an activated gamma-phospho-Glu-tRNA(Gln). This is Glutamyl-tRNA(Gln) amidotransferase subunit A from Prochlorococcus marinus (strain MIT 9211).